The following is a 154-amino-acid chain: 3-hydroxyacyl-[acyl-carrier-protein] dehydratase FabZ (154 aa).

Histidine 60 is an active-site residue.

This sequence belongs to the thioester dehydratase family. FabZ subfamily.

The protein resides in the cytoplasm. The enzyme catalyses a (3R)-hydroxyacyl-[ACP] = a (2E)-enoyl-[ACP] + H2O. Its function is as follows. Involved in unsaturated fatty acids biosynthesis. Catalyzes the dehydration of short chain beta-hydroxyacyl-ACPs and long chain saturated and unsaturated beta-hydroxyacyl-ACPs. The chain is 3-hydroxyacyl-[acyl-carrier-protein] dehydratase FabZ from Actinobacillus pleuropneumoniae serotype 5b (strain L20).